The following is a 124-amino-acid chain: NADH-quinone oxidoreductase subunit K (124 aa).

3 consecutive transmembrane segments (helical) span residues 28–48 (MEHGLILAAIIFAIGLCGVMV), 52–72 (FLFMLMSLEIMMSAAGLAFIV), and 84–104 (IMFIFILTLAAAEASLGLAIL).

This sequence belongs to the complex I subunit 4L family. As to quaternary structure, NDH-1 is composed of 14 different subunits. Subunits NuoA, H, J, K, L, M, N constitute the membrane sector of the complex.

It is found in the cell inner membrane. The catalysed reaction is a quinone + NADH + 5 H(+)(in) = a quinol + NAD(+) + 4 H(+)(out). In terms of biological role, NDH-1 shuttles electrons from NADH, via FMN and iron-sulfur (Fe-S) centers, to quinones in the respiratory chain. The immediate electron acceptor for the enzyme in this species is believed to be ubiquinone. Couples the redox reaction to proton translocation (for every two electrons transferred, four hydrogen ions are translocated across the cytoplasmic membrane), and thus conserves the redox energy in a proton gradient. The polypeptide is NADH-quinone oxidoreductase subunit K (Psychrobacter sp. (strain PRwf-1)).